The following is a 402-amino-acid chain: Lipid-A-disaccharide synthase (402 aa).

The protein belongs to the LpxB family.

The catalysed reaction is a lipid X + a UDP-2-N,3-O-bis[(3R)-3-hydroxyacyl]-alpha-D-glucosamine = a lipid A disaccharide + UDP + H(+). Its pathway is bacterial outer membrane biogenesis; LPS lipid A biosynthesis. Condensation of UDP-2,3-diacylglucosamine and 2,3-diacylglucosamine-1-phosphate to form lipid A disaccharide, a precursor of lipid A, a phosphorylated glycolipid that anchors the lipopolysaccharide to the outer membrane of the cell. This chain is Lipid-A-disaccharide synthase, found in Cupriavidus pinatubonensis (strain JMP 134 / LMG 1197) (Cupriavidus necator (strain JMP 134)).